A 295-amino-acid polypeptide reads, in one-letter code: Trimeric intracellular cation channel type A (295 aa).

Over 1 to 18 (MELLSALSLGELALSFSR) the chain is Lumenal. The helical transmembrane segment at 19 to 39 (VPLFPVFDLSYFIVSILYLKY) threads the bilayer. The Cytoplasmic segment spans residues 40-51 (EPGAVELSRRHP). The helical transmembrane segment at 52–72 (VASWLCAMLHCFGSYILADLL) threads the bilayer. Residues 73–85 (LGEPLIDYFSNNS) lie on the Lumenal side of the membrane. Position 74 (Gly74) interacts with Ca(2+). Residues 86-106 (SILLASAVWYLIFFCPLDLFY) form a helical membrane-spanning segment. The Cytoplasmic segment spans residues 107-144 (KCVCFLPVKLIFVAMKEVVRVRKIAVGIHHAHHHYHHG). 2 residues coordinate a 1,2-diacyl-sn-glycero-3-phospho-(1D-myo-inositol-4,5-bisphosphate): Lys122 and Arg126. A helical membrane pass occupies residues 145-165 (WFIMIATGWVKGSGVALLSNV). Residues 166 to 178 (EQLLRGVWKPETN) are Lumenal-facing. A helical membrane pass occupies residues 179-199 (EILHMSFPTKASLYGAILFTL). At 200–209 (QQTRWLPVSK) the chain is on the cytoplasmic side. Residues 210–230 (ASLIFIFTMFMVSCKVFLTAT) traverse the membrane as a helical segment. The Lumenal portion of the chain corresponds to 231 to 234 (HSHS). The helical transmembrane segment at 235–255 (SPFDVLEAYVCPVLFGTGSGG) threads the bilayer. At 256–295 (DHPQDNHGAWPGGPPSGALATKSKEELSEGSRKKKTKKAD) the chain is on the cytoplasmic side. The disordered stretch occupies residues 256–295 (DHPQDNHGAWPGGPPSGALATKSKEELSEGSRKKKTKKAD). Over residues 277-286 (KSKEELSEGS) the composition is skewed to basic and acidic residues.

It belongs to the TMEM38 family. As to quaternary structure, homotrimer; conformation seems to be controled by binding to diacylglycerol (DAG).

It localises to the sarcoplasmic reticulum membrane. The protein localises to the nucleus membrane. The enzyme catalyses K(+)(in) = K(+)(out). Channel activity is activated by a change of voltage within the sarcoplasmic reticulum lumen and blocked by luminal high Ca(2+) levels. Intracellular monovalent cation channel required for maintenance of rapid intracellular calcium release. Acts as a potassium counter-ion channel that functions in synchronization with calcium release from intracellular stores. Opened by a change of voltage within the sarcoplasmic reticulum lumen. The protein is Trimeric intracellular cation channel type A of Oryctolagus cuniculus (Rabbit).